The primary structure comprises 451 residues: Tubulin beta-4 chain (451 aa).

GTP contacts are provided by Gln-11, Glu-69, Ser-138, Gly-142, Thr-143, Gly-144, Asn-204, and Asn-226. Position 69 (Glu-69) interacts with Mg(2+). Polar residues predominate over residues 417-427; the sequence is DLVSEYQQYQD. Positions 417–451 are disordered; sequence DLVSEYQQYQDATAEEEGEYDEDDGGYGDEDDGMM. A compositionally biased stretch (acidic residues) spans 429–451; the sequence is TAEEEGEYDEDDGGYGDEDDGMM.

This sequence belongs to the tubulin family. As to quaternary structure, dimer of alpha and beta chains. A typical microtubule is a hollow water-filled tube with an outer diameter of 25 nm and an inner diameter of 15 nM. Alpha-beta heterodimers associate head-to-tail to form protofilaments running lengthwise along the microtubule wall with the beta-tubulin subunit facing the microtubule plus end conferring a structural polarity. Microtubules usually have 13 protofilaments but different protofilament numbers can be found in some organisms and specialized cells. The cofactor is Mg(2+).

Its subcellular location is the cytoplasm. The protein localises to the cytoskeleton. Functionally, tubulin is the major constituent of microtubules, a cylinder consisting of laterally associated linear protofilaments composed of alpha- and beta-tubulin heterodimers. Microtubules grow by the addition of GTP-tubulin dimers to the microtubule end, where a stabilizing cap forms. Below the cap, tubulin dimers are in GDP-bound state, owing to GTPase activity of alpha-tubulin. The polypeptide is Tubulin beta-4 chain (TUBB4) (Oomycete-like sp. (strain MacKay2000)).